The following is a 103-amino-acid chain: Flagellar hook-basal body complex protein FliE (103 aa).

It belongs to the FliE family.

The protein resides in the bacterial flagellum basal body. The polypeptide is Flagellar hook-basal body complex protein FliE (Cronobacter sakazakii (strain ATCC BAA-894) (Enterobacter sakazakii)).